Consider the following 141-residue polypeptide: Putative pre-16S rRNA nuclease (141 aa).

This sequence belongs to the YqgF nuclease family.

Its subcellular location is the cytoplasm. Could be a nuclease involved in processing of the 5'-end of pre-16S rRNA. The protein is Putative pre-16S rRNA nuclease of Histophilus somni (strain 129Pt) (Haemophilus somnus).